Reading from the N-terminus, the 315-residue chain is DNA-directed RNA polymerase subunit alpha (315 aa).

The alpha N-terminal domain (alpha-NTD) stretch occupies residues 1–228 (MLEIEKPVIQ…EHFKLFMTLT (228 aa)). The tract at residues 245–315 (KEKALEMTIE…LGLNLRLNDE (71 aa)) is alpha C-terminal domain (alpha-CTD).

Belongs to the RNA polymerase alpha chain family. As to quaternary structure, homodimer. The RNAP catalytic core consists of 2 alpha, 1 beta, 1 beta' and 1 omega subunit. When a sigma factor is associated with the core the holoenzyme is formed, which can initiate transcription.

The catalysed reaction is RNA(n) + a ribonucleoside 5'-triphosphate = RNA(n+1) + diphosphate. DNA-dependent RNA polymerase catalyzes the transcription of DNA into RNA using the four ribonucleoside triphosphates as substrates. In Clostridium perfringens (strain ATCC 13124 / DSM 756 / JCM 1290 / NCIMB 6125 / NCTC 8237 / Type A), this protein is DNA-directed RNA polymerase subunit alpha.